A 131-amino-acid polypeptide reads, in one-letter code: Colicin-N immunity protein (131 aa).

2 consecutive transmembrane segments (helical) span residues 66–84 (ILTPFTILYISMIYCFLLT) and 104–124 (VFVFFLYNTIYWDIYIHIFVL).

The protein localises to the cell membrane. The protein is Colicin-N immunity protein (cni) of Escherichia coli.